A 446-amino-acid polypeptide reads, in one-letter code: Minor fimbrium tip subunit Mfa3 (446 aa).

A signal peptide spans 1–20; it reads MMQLKKRYFALILLLFLWSG. C21 carries N-palmitoyl cysteine lipidation. A lipid anchor (S-diacylglycerol cysteine) is attached at C21. Positions 21–43 are excised as a propeptide; it reads CDRGVDPQPDPLQPDVYLLVNAR.

It belongs to the bacteroidetes fimbrillin superfamily. FimB/Mfa2 family. In terms of assembly, component of the fimbrium tip. Minor fimbriae are composed of a structural subunit, most often Mfa1, and the accessory subunits Mfa3, Mfa4 and Mfa5. Fimbrium assembly occurs by linear, head-to-tail oligomerization of fimbrial subunits. This is mediated via insertion of a C-terminal beta-strand from one subunit into a groove in the N-terminal domain of the following subunit. Mfa3 is required for Mfa4 and Mfa5 insertion into the fimbrium.

The protein resides in the fimbrium. It is found in the cell outer membrane. Its function is as follows. Tip subunit of the minor fimbriae. These filamentous pili are attached to the cell surface; they mediate biofilm formation, adhesion onto host cells and onto other bacteria that are part of the oral microbiome. They play an important role in invasion of periodontal tissues and are recognized as major virulence factors. Fimbrium subunits from different strains have highly divergent sequences, and this correlates with pathogenicity. The polypeptide is Minor fimbrium tip subunit Mfa3 (mfa3) (Porphyromonas gingivalis (strain ATCC 33277 / DSM 20709 / CIP 103683 / JCM 12257 / NCTC 11834 / 2561)).